The following is a 394-amino-acid chain: Alanine racemase 2 (394 aa).

Catalysis depends on K39, which acts as the Proton acceptor; specific for D-alanine. At K39 the chain carries N6-(pyridoxal phosphate)lysine. R139 provides a ligand contact to substrate. Y272 (proton acceptor; specific for L-alanine) is an active-site residue. M320 is a substrate binding site.

This sequence belongs to the alanine racemase family. Pyridoxal 5'-phosphate is required as a cofactor.

The enzyme catalyses L-alanine = D-alanine. It participates in amino-acid biosynthesis; D-alanine biosynthesis; D-alanine from L-alanine: step 1/1. Its function is as follows. Catalyzes the interconversion of L-alanine and D-alanine. May also act on other amino acids. In Bacillus subtilis (strain 168), this protein is Alanine racemase 2 (alr2).